A 346-amino-acid chain; its full sequence is Methionine import ATP-binding protein MetN 1 (346 aa).

In terms of domain architecture, ABC transporter spans 2–241; that stretch reads IELKNVSKVF…PQHVTTKKFV (240 aa). ATP is bound at residue 38-45; it reads GYSGAGKS.

The protein belongs to the ABC transporter superfamily. Methionine importer (TC 3.A.1.24) family. As to quaternary structure, the complex is composed of two ATP-binding proteins (MetN), two transmembrane proteins (MetI) and a solute-binding protein (MetQ).

The protein resides in the cell membrane. It carries out the reaction L-methionine(out) + ATP + H2O = L-methionine(in) + ADP + phosphate + H(+). The catalysed reaction is D-methionine(out) + ATP + H2O = D-methionine(in) + ADP + phosphate + H(+). In terms of biological role, part of the ABC transporter complex MetNIQ involved in methionine import. Responsible for energy coupling to the transport system. The polypeptide is Methionine import ATP-binding protein MetN 1 (Bacillus anthracis).